Reading from the N-terminus, the 335-residue chain is MINSDNQKFSEIRFDWERDEILEILNYPLIDLMWEAQIIHRRFNQYKVQLASLFSVKTGGCEENCSYCSQSIYSSSQIKSHPQFEVEAVLNRAKTAKKEGADRFCMGWAWREIRDGKPFNSMIEMVKGVKELGMEACVTAGMLTDEQALKLADAGLTAYNHNLDTSPEYYKNIITTRTYQDRLETIKRVRNAGINVCCGGIIGLGEDNGDRASLLEVLSNMNPHPESVPINSLVAIEGTGLEGGKEIDSIEMIRMIATARILMPKSKIRLSAGRENLTKEAQILCFQCGANSIFYGDELLTTSNPSFQDDRKLLKDVGVLFNKDFEYCDKTVSTV.

The Radical SAM core domain occupies 46–274 (YKVQLASLFS…KSKIRLSAGR (229 aa)). Cysteine 61, cysteine 65, and cysteine 68 together coordinate [4Fe-4S] cluster. Residues cysteine 105, cysteine 137, cysteine 197, and arginine 269 each coordinate [2Fe-2S] cluster.

This sequence belongs to the radical SAM superfamily. Biotin synthase family. In terms of assembly, homodimer. It depends on [4Fe-4S] cluster as a cofactor. The cofactor is [2Fe-2S] cluster.

The catalysed reaction is (4R,5S)-dethiobiotin + (sulfur carrier)-SH + 2 reduced [2Fe-2S]-[ferredoxin] + 2 S-adenosyl-L-methionine = (sulfur carrier)-H + biotin + 2 5'-deoxyadenosine + 2 L-methionine + 2 oxidized [2Fe-2S]-[ferredoxin]. Its pathway is cofactor biosynthesis; biotin biosynthesis; biotin from 7,8-diaminononanoate: step 2/2. Its function is as follows. Catalyzes the conversion of dethiobiotin (DTB) to biotin by the insertion of a sulfur atom into dethiobiotin via a radical-based mechanism. This chain is Biotin synthase, found in Prochlorococcus marinus subsp. pastoris (strain CCMP1986 / NIES-2087 / MED4).